Reading from the N-terminus, the 32-residue chain is ATP synthase subunit O, mitochondrial (32 aa).

The protein belongs to the ATPase delta chain family. In terms of assembly, F-type ATPases have 2 components, CF(1) - the catalytic core - and CF(0) - the membrane proton channel. CF(1) has five subunits: alpha(3), beta(3), gamma(1), delta(1), epsilon(1). CF(0) has three main subunits: a, b and c.

It is found in the mitochondrion. Its subcellular location is the mitochondrion inner membrane. Functionally, mitochondrial membrane ATP synthase (F(1)F(0) ATP synthase or Complex V) produces ATP from ADP in the presence of a proton gradient across the membrane which is generated by electron transport complexes of the respiratory chain. F-type ATPases consist of two structural domains, F(1) - containing the extramembraneous catalytic core and F(0) - containing the membrane proton channel, linked together by a central stalk and a peripheral stalk. During catalysis, ATP synthesis in the catalytic domain of F(1) is coupled via a rotary mechanism of the central stalk subunits to proton translocation. Part of the complex F(0) domain and the peripheric stalk, which acts as a stator to hold the catalytic alpha(3)beta(3) subcomplex and subunit a/ATP6 static relative to the rotary elements. In Spinacia oleracea (Spinach), this protein is ATP synthase subunit O, mitochondrial.